The primary structure comprises 344 residues: DNA-directed RNA polymerase subunit alpha (344 aa).

Residues 1-238 form an alpha N-terminal domain (alpha-NTD) region; the sequence is MKVIKTAPLI…KQLGVFGERP (238 aa). The tract at residues 254-344 is alpha C-terminal domain (alpha-CTD); that stretch reads AKDLSAKIES…EKLEDKGGND (91 aa).

This sequence belongs to the RNA polymerase alpha chain family. As to quaternary structure, homodimer. The RNAP catalytic core consists of 2 alpha, 1 beta, 1 beta' and 1 omega subunit. When a sigma factor is associated with the core the holoenzyme is formed, which can initiate transcription.

The enzyme catalyses RNA(n) + a ribonucleoside 5'-triphosphate = RNA(n+1) + diphosphate. In terms of biological role, DNA-dependent RNA polymerase catalyzes the transcription of DNA into RNA using the four ribonucleoside triphosphates as substrates. The polypeptide is DNA-directed RNA polymerase subunit alpha (Helicobacter pylori (strain ATCC 700392 / 26695) (Campylobacter pylori)).